The following is a 277-amino-acid chain: Ribosomal RNA small subunit methyltransferase A (277 aa).

6 residues coordinate S-adenosyl-L-methionine: N20, L22, G47, E68, D93, and N114.

It belongs to the class I-like SAM-binding methyltransferase superfamily. rRNA adenine N(6)-methyltransferase family. RsmA subfamily.

The protein localises to the cytoplasm. It catalyses the reaction adenosine(1518)/adenosine(1519) in 16S rRNA + 4 S-adenosyl-L-methionine = N(6)-dimethyladenosine(1518)/N(6)-dimethyladenosine(1519) in 16S rRNA + 4 S-adenosyl-L-homocysteine + 4 H(+). Specifically dimethylates two adjacent adenosines (A1518 and A1519) in the loop of a conserved hairpin near the 3'-end of 16S rRNA in the 30S particle. May play a critical role in biogenesis of 30S subunits. The chain is Ribosomal RNA small subunit methyltransferase A from Aliivibrio salmonicida (strain LFI1238) (Vibrio salmonicida (strain LFI1238)).